Consider the following 449-residue polypeptide: TNF receptor-associated factor family protein DDB_G0272340 (449 aa).

The segment at 33 to 76 (CPICEECIMDVNKCEALQCKEGHVHCRLCWMKSLESKKECMTCR) adopts an RING-type; degenerate zinc-finger fold. TRAF-type zinc fingers lie at residues 133–187 (GHIK…IDDS) and 189–251 (VHYS…SELS). Residues 263–309 (MEATIDQHICKFEKSEKEYKKLELEYNRLKDDFKILQSELKVIRELK) adopt a coiled-coil conformation. Residues 311–437 (NYQNKWVITN…QNSVTLNINI (127 aa)) enclose the MATH domain.

This sequence belongs to the TNF receptor-associated factor family. A subfamily.

The protein localises to the cytoplasm. In terms of biological role, probable adapter protein and signal transducer that links members of the tumor necrosis factor receptor family to different signaling pathways by association with the receptor cytoplasmic domain and kinases. The sequence is that of TNF receptor-associated factor family protein DDB_G0272340 from Dictyostelium discoideum (Social amoeba).